The following is a 117-amino-acid chain: Large ribosomal subunit protein bL19 (117 aa).

It belongs to the bacterial ribosomal protein bL19 family.

In terms of biological role, this protein is located at the 30S-50S ribosomal subunit interface and may play a role in the structure and function of the aminoacyl-tRNA binding site. The protein is Large ribosomal subunit protein bL19 of Aliivibrio salmonicida (strain LFI1238) (Vibrio salmonicida (strain LFI1238)).